Here is a 542-residue protein sequence, read N- to C-terminus: MAKTIAYDEEARRGLERGLNSLADAVKVTLGPKGRNVVLEKKWGAPTITNDGVSIAKEIELEDPYEKIGAELVKEVAKKTDDVAGDGTTTATVLAQALVREGLRNVAAGANPLGRKRGIEKAVEAVTAKLLDTAKEVETKEQIAATAGISAGDAAIGELIAEAMDKVGKEGVITVEESNTFGLQLELTEGMRFDKGYISGYFATDPERQEAVLEDPYILLVGSKVSTVKDLLPLLEKVIQAGKPLLIIAEDVEGEALSTLVVKKILGTFKSVAVKAPGGGDRRKAQLADIAILTGGQVISEEVGLSLETAGIELLGQARKVVVTKDETTIVEGAGDAEAIAGRVSQIRAEIENSDSDYDREKLQERLAKLAGGVAVIKAGAATEVELKERKHRIEDAVRNAKAAVEEGIVAGGGVAFLQSVPALDDFKLEGDEATGANIVRVALSAPLKQIAFNAGLEPGVLAEKVSNLPAGQGLNAQTNEDEDLLAAGVADPVKVTRSALQNAASIAALFLTTEAVVADKPEKASAAPATGHRFKMGGMDF.

Residues 29 to 32, 86 to 90, Gly-413, and Asp-492 contribute to the ATP site; these read TLGP and DGTTT.

It belongs to the chaperonin (HSP60) family. Forms a cylinder of 14 subunits composed of two heptameric rings stacked back-to-back. Interacts with the co-chaperonin GroES.

It localises to the cytoplasm. It catalyses the reaction ATP + H2O + a folded polypeptide = ADP + phosphate + an unfolded polypeptide.. Functionally, together with its co-chaperonin GroES, plays an essential role in assisting protein folding. The GroEL-GroES system forms a nano-cage that allows encapsulation of the non-native substrate proteins and provides a physical environment optimized to promote and accelerate protein folding. This is Chaperonin GroEL from Nocardia asteroides.